The sequence spans 370 residues: DNA primase large subunit PriL (370 aa).

Cysteine 230, cysteine 301, cysteine 310, and cysteine 317 together coordinate [4Fe-4S] cluster. Positions 337–370 (EGEEAQGKEQGKEKDDGKEKENGKESEVKKKKEK) are disordered.

This sequence belongs to the eukaryotic-type primase large subunit family. As to quaternary structure, heterodimer of a small subunit (PriS) and a large subunit (PriL). [4Fe-4S] cluster serves as cofactor.

Regulatory subunit of DNA primase, an RNA polymerase that catalyzes the synthesis of short RNA molecules used as primers for DNA polymerase during DNA replication. Stabilizes and modulates the activity of the small subunit, increasing the rate of DNA synthesis, and conferring RNA synthesis capability. The DNA polymerase activity may enable DNA primase to also catalyze primer extension after primer synthesis. May also play a role in DNA repair. The protein is DNA primase large subunit PriL of Methanosarcina mazei (strain ATCC BAA-159 / DSM 3647 / Goe1 / Go1 / JCM 11833 / OCM 88) (Methanosarcina frisia).